A 497-amino-acid polypeptide reads, in one-letter code: Alkane hydroxylase MAH1 (497 aa).

The chain crosses the membrane as a helical span at residues 3–23 (MLGFYVTFIFFLVCLFTYFFL). Cys-444 is a heme binding site.

It belongs to the cytochrome P450 family. Heme is required as a cofactor. Expressed in the expanding regions of the inflorescence stems, specifically to the epidermal pavement cells, petioles and siliques.

It localises to the endoplasmic reticulum membrane. In terms of biological role, involved in the formation of secondary alcohols and ketones in stem cuticular wax. Catalyzes the hydroxylation of a methylene unit in the middle of alkane molecules to form secondary alcohols and possibly also a second hydroxylation leading to the corresponding ketones. The protein is Alkane hydroxylase MAH1 of Arabidopsis thaliana (Mouse-ear cress).